A 259-amino-acid polypeptide reads, in one-letter code: Thiazole synthase (259 aa).

The active-site Schiff-base intermediate with DXP is Lys98. Residues Gly159, 185 to 186, and 207 to 208 each bind 1-deoxy-D-xylulose 5-phosphate; these read AG and NS.

Belongs to the ThiG family. As to quaternary structure, homotetramer. Forms heterodimers with either ThiH or ThiS.

Its subcellular location is the cytoplasm. It catalyses the reaction [ThiS sulfur-carrier protein]-C-terminal-Gly-aminoethanethioate + 2-iminoacetate + 1-deoxy-D-xylulose 5-phosphate = [ThiS sulfur-carrier protein]-C-terminal Gly-Gly + 2-[(2R,5Z)-2-carboxy-4-methylthiazol-5(2H)-ylidene]ethyl phosphate + 2 H2O + H(+). It functions in the pathway cofactor biosynthesis; thiamine diphosphate biosynthesis. In terms of biological role, catalyzes the rearrangement of 1-deoxy-D-xylulose 5-phosphate (DXP) to produce the thiazole phosphate moiety of thiamine. Sulfur is provided by the thiocarboxylate moiety of the carrier protein ThiS. In vitro, sulfur can be provided by H(2)S. This chain is Thiazole synthase, found in Chlorobium limicola (strain DSM 245 / NBRC 103803 / 6330).